A 424-amino-acid chain; its full sequence is Serine--tRNA ligase (424 aa).

229 to 231 (TAE) provides a ligand contact to L-serine. 260-262 (RRE) serves as a coordination point for ATP. An L-serine-binding site is contributed by glutamate 283. 347-350 (EVSS) is an ATP binding site. Serine 383 is an L-serine binding site.

This sequence belongs to the class-II aminoacyl-tRNA synthetase family. Type-1 seryl-tRNA synthetase subfamily. Homodimer. The tRNA molecule binds across the dimer.

Its subcellular location is the cytoplasm. It carries out the reaction tRNA(Ser) + L-serine + ATP = L-seryl-tRNA(Ser) + AMP + diphosphate + H(+). The catalysed reaction is tRNA(Sec) + L-serine + ATP = L-seryl-tRNA(Sec) + AMP + diphosphate + H(+). It functions in the pathway aminoacyl-tRNA biosynthesis; selenocysteinyl-tRNA(Sec) biosynthesis; L-seryl-tRNA(Sec) from L-serine and tRNA(Sec): step 1/1. Functionally, catalyzes the attachment of serine to tRNA(Ser). Is also able to aminoacylate tRNA(Sec) with serine, to form the misacylated tRNA L-seryl-tRNA(Sec), which will be further converted into selenocysteinyl-tRNA(Sec). The chain is Serine--tRNA ligase from Roseiflexus sp. (strain RS-1).